The chain runs to 390 residues: MKVRALVVDDSGFFRRRIKSMLEEHPGIEVVGEAANGRQAVEQAQKLRPDVITMDIEMPEMDGITAVREIMRRQPTPVLMFSSLTYDGARETLDALDAGASDFIPKRFADISGDMEQVKRQLQERVLALGGGRGAPAGRAPRPAAPVDRGARSERARPAPGEASGRAPVPPTGARARPEAPVAPTGAPAAPAPERGQRIRPGALRLVVIGTSTGGPVALQRVMSRLPAGFPLPVLIIQHMPASFTPAFAERLNELCRIEVREAKNGDELRPGQALLAPGGRQAGVEERGGKLTVRIFDASSDQFYKPSVDIAFASAAKYCPGKALGVVLTGMGADGCEGAKLLKRTGAPIWSQDEATSVIYGMPAAVAKAGVTDRVLPLDQVGEELAKLR.

Residues 4-121 (RALVVDDSGF…SGDMEQVKRQ (118 aa)) enclose the Response regulatory domain. Residue Asp-55 is modified to 4-aspartylphosphate. Residues 130 to 198 (GGGRGAPAGR…AAPAPERGQR (69 aa)) form a disordered region. Low complexity-rich tracts occupy residues 136 to 148 (PAGRAPRPAAPVD) and 179 to 193 (EAPVAPTGAPAAPAP). A CheB-type methylesterase domain is found at 201–390 (PGALRLVVIG…QVGEELAKLR (190 aa)). Active-site residues include Ser-212, His-239, and Asp-335.

This sequence belongs to the CheB family. In terms of processing, phosphorylated by CheA. Phosphorylation of the N-terminal regulatory domain activates the methylesterase activity.

It is found in the cytoplasm. It carries out the reaction [protein]-L-glutamate 5-O-methyl ester + H2O = L-glutamyl-[protein] + methanol + H(+). The enzyme catalyses L-glutaminyl-[protein] + H2O = L-glutamyl-[protein] + NH4(+). Its function is as follows. Involved in chemotaxis. Part of a chemotaxis signal transduction system that modulates chemotaxis in response to various stimuli. Catalyzes the demethylation of specific methylglutamate residues introduced into the chemoreceptors (methyl-accepting chemotaxis proteins or MCP) by CheR. Also mediates the irreversible deamidation of specific glutamine residues to glutamic acid. The chain is Protein-glutamate methylesterase/protein-glutamine glutaminase from Alkalilimnicola ehrlichii (strain ATCC BAA-1101 / DSM 17681 / MLHE-1).